Consider the following 886-residue polypeptide: Envelope glycoprotein GP350 (886 aa).

Residues 1–839 (MEAALLVCQY…TSQPRFSNLS (839 aa)) are Virion surface-facing. Residues Asn-47, Asn-87, Asn-114, Asn-166, Asn-169, Asn-195, Asn-229, Asn-277, Asn-318, Asn-328, Asn-345, Asn-356, Asn-378, Asn-386, Asn-411, Asn-435, Asn-443, Asn-457, Asn-497, Asn-519, Asn-533, Asn-554, Asn-568, Asn-589, Asn-603, Asn-606, Asn-624, and Asn-635 are each glycosylated (N-linked (GlcNAc...) asparagine; by host). The interval 423–810 (KAPESTTTSP…PSTSSKLRPR (388 aa)) is disordered. The segment covering 428 to 437 (TTTSPTLNTT) has biased composition (low complexity). Residues 442–488 (PNTTTGLPSSTHVPTNLTAPASTGPTVSTADVTSPTPAGTTSGASPV) are compositionally biased toward polar residues. Over residues 507 to 595 (TSPTSAVTTP…PTPNATSPTV (89 aa)) the composition is skewed to low complexity. The segment covering 596–637 (GETSPQANTTNHTLGGTSSTPVVTSPPKNATSAVTTGQHNIT) has biased composition (polar residues). Residues 638-660 (SSSTSSMSLRPSSISETLSPSTS) show a composition bias toward low complexity. Asn-662 and Asn-680 each carry an N-linked (GlcNAc...) asparagine; by host glycan. A compositionally biased stretch (low complexity) spans 684 to 699 (VTPASTSTHHVSTSSP). Residues 704–720 (GTTSQASGPGNSSTSTK) show a composition bias toward polar residues. N-linked (GlcNAc...) asparagine; by host glycosylation is found at Asn-714, Asn-725, Asn-734, and Asn-759. Positions 733–760 (KNATSPQAPSGQKTAVPTVTSTGGKANS) are enriched in polar residues. Residues 761–771 (TTGGKHTTGHG) show a composition bias toward low complexity. Residues 773 to 806 (RTSTEPTTDYGGDSTTPRTRYNATTYLPPSTSSK) are compositionally biased toward polar residues. Residues Asn-794 and Asn-837 are each glycosylated (N-linked (GlcNAc...) asparagine; by host). The helical transmembrane segment at 840–860 (MLVLQWASLAVLTLLLLLVMA) threads the bilayer. At 861–886 (DCAFRRNLSTSHTYTTPPYDDAETYV) the chain is on the intravirion side.

It belongs to the Epstein-Barr GP350 family. In terms of assembly, interacts with host CR2. Post-translationally, extensively glycosylated.

It is found in the virion membrane. It localises to the host membrane. Functionally, initiates virion attachment to host B-lymphocyte cell, leading to virus entry. Acts by binding to host CR2 at the surface of B-lymphocytes, facilitating the binding of viral glycoprotein gp42 to HLA class II molecules. Attachment triggers virion-host membrane fusion and invasion of the host cell. This chain is Envelope glycoprotein GP350, found in Homo sapiens (Human).